A 247-amino-acid chain; its full sequence is Adenosylcobinamide-GDP ribazoletransferase (247 aa).

Transmembrane regions (helical) follow at residues 34-54, 59-79, 113-133, 138-158, and 194-214; these read IITF…VFMV, CGVP…TGGF, GGLA…ELAL, ILAS…LLMY, and VLLP…AIFI.

Belongs to the CobS family. The cofactor is Mg(2+).

Its subcellular location is the cell inner membrane. It catalyses the reaction alpha-ribazole + adenosylcob(III)inamide-GDP = adenosylcob(III)alamin + GMP + H(+). The catalysed reaction is alpha-ribazole 5'-phosphate + adenosylcob(III)inamide-GDP = adenosylcob(III)alamin 5'-phosphate + GMP + H(+). Its pathway is cofactor biosynthesis; adenosylcobalamin biosynthesis; adenosylcobalamin from cob(II)yrinate a,c-diamide: step 7/7. In terms of biological role, joins adenosylcobinamide-GDP and alpha-ribazole to generate adenosylcobalamin (Ado-cobalamin). Also synthesizes adenosylcobalamin 5'-phosphate from adenosylcobinamide-GDP and alpha-ribazole 5'-phosphate. The protein is Adenosylcobinamide-GDP ribazoletransferase of Escherichia coli (strain 55989 / EAEC).